The chain runs to 175 residues: Dual-action ribosomal maturation protein DarP (175 aa).

This sequence belongs to the DarP family.

The protein localises to the cytoplasm. Member of a network of 50S ribosomal subunit biogenesis factors which assembles along the 30S-50S interface, preventing incorrect 23S rRNA structures from forming. Promotes peptidyl transferase center (PTC) maturation. This chain is Dual-action ribosomal maturation protein DarP, found in Vibrio parahaemolyticus serotype O3:K6 (strain RIMD 2210633).